Consider the following 570-residue polypeptide: Proline--tRNA ligase (570 aa).

The protein belongs to the class-II aminoacyl-tRNA synthetase family. ProS type 1 subfamily. As to quaternary structure, homodimer.

Its subcellular location is the cytoplasm. It catalyses the reaction tRNA(Pro) + L-proline + ATP = L-prolyl-tRNA(Pro) + AMP + diphosphate. Catalyzes the attachment of proline to tRNA(Pro) in a two-step reaction: proline is first activated by ATP to form Pro-AMP and then transferred to the acceptor end of tRNA(Pro). As ProRS can inadvertently accommodate and process non-cognate amino acids such as alanine and cysteine, to avoid such errors it has two additional distinct editing activities against alanine. One activity is designated as 'pretransfer' editing and involves the tRNA(Pro)-independent hydrolysis of activated Ala-AMP. The other activity is designated 'posttransfer' editing and involves deacylation of mischarged Ala-tRNA(Pro). The misacylated Cys-tRNA(Pro) is not edited by ProRS. This is Proline--tRNA ligase from Pelotomaculum thermopropionicum (strain DSM 13744 / JCM 10971 / SI).